Here is a 286-residue protein sequence, read N- to C-terminus: ATP synthase gamma chain (286 aa).

This sequence belongs to the ATPase gamma chain family. As to quaternary structure, F-type ATPases have 2 components, CF(1) - the catalytic core - and CF(0) - the membrane proton channel. CF(1) has five subunits: alpha(3), beta(3), gamma(1), delta(1), epsilon(1). CF(0) has three main subunits: a, b and c.

Its subcellular location is the cell inner membrane. Functionally, produces ATP from ADP in the presence of a proton gradient across the membrane. The gamma chain is believed to be important in regulating ATPase activity and the flow of protons through the CF(0) complex. The sequence is that of ATP synthase gamma chain from Marinomonas sp. (strain MWYL1).